A 2724-amino-acid polypeptide reads, in one-letter code: Eukaryotic translation initiation factor 2-alpha kinase 2 (2724 aa).

Residues 1-24 (MLNMVDQKKGINNGSSTGVINNIN) lie on the Cytoplasmic side of the membrane. Residues 25–45 (GKIKNEFIFMYLIAAGGFSCV) form a helical membrane-spanning segment. The Extracellular portion of the chain corresponds to 46–673 (YKIKKKKSNK…KFYIKRHNQK (628 aa)). The interval 112 to 153 (KRERRGRRKEQQREQMGDKRREKRQQQRREKRKEQNTNTKKR) is disordered. Over residues 120-146 (KEQQREQMGDKRREKRQQQRREKRKEQ) the composition is skewed to basic and acidic residues. Residues 674 to 694 (TYFFENIIFYHYIIMLFLDIE) traverse the membrane as a helical segment. At 695 to 718 (KYKNKFVSLFQYNLYRKLLKISKR) the chain is on the cytoplasmic side. A helical membrane pass occupies residues 719 to 739 (IVLMLHRIETNVICIFLLKHF). The Extracellular portion of the chain corresponds to 740-800 (EDYFIRKGIH…KKNIFNFFIE (61 aa)). The helical transmembrane segment at 801–821 (LFLNNIQINIFKKFEILYLII) threads the bilayer. Topologically, residues 822–832 (YFYNYFEKSKQ) are cytoplasmic. The chain crosses the membrane as a helical span at residues 833–853 (FDIEGIGDIIYVWLSLINLFY). The Extracellular portion of the chain corresponds to 854 to 876 (DDKGKCIKILSKIFAKLNKKLYY). The chain crosses the membrane as a helical span at residues 877-897 (VYWGKLYIIMNWTTIVDTIFI). Topologically, residues 898-908 (RNVLSINREGN) are cytoplasmic. A helical transmembrane segment spans residues 909–929 (YYWVIIVLKMINYFVNVAYTL). The Extracellular portion of the chain corresponds to 930 to 996 (TRMDIFFIKV…KKNYDIYTKY (67 aa)). Residues 997 to 1017 (AILFIYCFIIQAYYFDTLFNI) form a helical membrane-spanning segment. The Cytoplasmic segment spans residues 1018–2724 (RSLESNEIAN…GDIFLPDKCP (1707 aa)). ATP is bound at residue lysine 2029. Positions 2084–2719 (KHYFTKCGIL…KIISAGDIFL (636 aa)) constitute a Protein kinase domain. A coiled-coil region spans residues 2120–2155 (INTLNEENQNMFCKNKEKKEENYKKIDTNISQFSEK). The active-site Proton acceptor is the aspartate 2229. The disordered stretch occupies residues 2479–2507 (EKMDKNKIAAQKKKKKKENKHPIGRRSTN). Over residues 2488–2502 (AQKKKKKKENKHPIG) the composition is skewed to basic residues.

It belongs to the protein kinase superfamily. Ser/Thr protein kinase family. GCN2 subfamily. In terms of processing, auto-phosphorylated.

Its subcellular location is the membrane. The catalysed reaction is L-seryl-[protein] + ATP = O-phospho-L-seryl-[protein] + ADP + H(+). It carries out the reaction L-threonyl-[protein] + ATP = O-phospho-L-threonyl-[protein] + ADP + H(+). Its function is as follows. Phosphorylates translation factor eIF2alpha in salivary gland sporozoites during dormancy, which leads to an inhibition of protein translation and accumulation of stalled mRNAs into granules. The protein is Eukaryotic translation initiation factor 2-alpha kinase 2 of Plasmodium berghei (strain Anka).